Reading from the N-terminus, the 203-residue chain is Small ribosomal subunit protein uS2 (203 aa).

Belongs to the universal ribosomal protein uS2 family.

The polypeptide is Small ribosomal subunit protein uS2 (Methanopyrus kandleri (strain AV19 / DSM 6324 / JCM 9639 / NBRC 100938)).